We begin with the raw amino-acid sequence, 87 residues long: Small ribosomal subunit protein uS15c (87 aa).

The protein belongs to the universal ribosomal protein uS15 family. In terms of assembly, part of the 30S ribosomal subunit.

The protein localises to the plastid. Its subcellular location is the chloroplast. This Solanum lycopersicum (Tomato) protein is Small ribosomal subunit protein uS15c (rps15).